Reading from the N-terminus, the 262-residue chain is CD99 antigen-like protein 2 (262 aa).

The N-terminal stretch at 1–25 (MVAWRSAFLVCLAFSLATLVQRGSG) is a signal peptide. The Extracellular segment spans residues 26-185 (DFDDFNLEDA…PGSGMVAEPG (160 aa)). The segment at 38–181 (ETSSVKQPWD…SNDDPGSGMV (144 aa)) is disordered. 2 stretches are compositionally biased toward low complexity: residues 49–60 (TTTTTTNRPGTT) and 98–119 (VTTT…GNDF). Composition is skewed to basic and acidic residues over residues 125–136 (LDDRNDRDDGRR) and 159–168 (YKPDKGKGDG). O-linked (Xyl...) (chondroitin sulfate) serine glycosylation occurs at Ser-178. A helical transmembrane segment spans residues 186–206 (TIAGVASALAMALIGAVSSYI). The Cytoplasmic portion of the chain corresponds to 207–262 (SYQQKKFCFSIQQGLNADYVKGENLEAVVCEEPQVKYSTLHTQSAEPPPPPEPARI).

The protein belongs to the CD99 family. Post-translationally, O-glycosylated. As to expression, detected in cerebrospinal fluid (at protein level). Expressed in many tissues, with low expression in thymus.

Its subcellular location is the cell membrane. It is found in the cell junction. It localises to the secreted. In terms of biological role, plays a role in a late step of leukocyte extravasation helping cells to overcome the endothelial basement membrane. Acts at the same site as, but independently of, PECAM1. Homophilic adhesion molecule, but these interactions may not be required for cell aggregation. This chain is CD99 antigen-like protein 2 (CD99L2), found in Homo sapiens (Human).